The sequence spans 128 residues: Probable 4-amino-4-deoxy-L-arabinose-phosphoundecaprenol flippase subunit ArnF (128 aa).

Residues methionine 1 to glycine 2 lie on the Cytoplasmic side of the membrane. The helical transmembrane segment at leucine 3–alanine 23 threads the bilayer. Residues alanine 24–histidine 32 lie on the Periplasmic side of the membrane. A helical membrane pass occupies residues leucine 33 to glycine 53. Residues leucine 54–alanine 76 are Cytoplasmic-facing. Residues tyrosine 77–tryptophan 97 traverse the membrane as a helical segment. Over glutamate 98–threonine 100 the chain is Periplasmic. The helical transmembrane segment at phenylalanine 101–leucine 121 threads the bilayer. The Cytoplasmic portion of the chain corresponds to proline 122–tyrosine 128.

It belongs to the ArnF family. Heterodimer of ArnE and ArnF.

It is found in the cell inner membrane. It functions in the pathway bacterial outer membrane biogenesis; lipopolysaccharide biosynthesis. In terms of biological role, translocates 4-amino-4-deoxy-L-arabinose-phosphoundecaprenol (alpha-L-Ara4N-phosphoundecaprenol) from the cytoplasmic to the periplasmic side of the inner membrane. This Escherichia coli O7:K1 (strain IAI39 / ExPEC) protein is Probable 4-amino-4-deoxy-L-arabinose-phosphoundecaprenol flippase subunit ArnF.